The chain runs to 780 residues: MLGESVPAAVEQEQLGEVKLEEEEAVSPEDPRRPESRLRPEVAHQLFRCFQYQEDMGPRASLSRLRELCGHWLRPALHTKKQILELLVLEQFLSVLPPHLLGRLQGQPLRDGEEVVLLLEGIHREPSHAGPLDFSCNAGKSCPRADVTLEEKGCASQVPSHSPKKELPAEEPSVLGPSDEPPRPQPRAAQPAEPGQWRLPPSSKQPLSPGPQKTFQALQESSPQGPSPWPEESSRDQELAAVLECLTFEDVPENKAWPAHPLGFGSRTPDKEEFKQEEPKGAAWPTPILAESQADSPGVPGEPCAQSLGRGAAASGPGEDGSLLGSSEILEVKVAEGVPEPNPELQFICADCGVSFPQLSRLKAHQLRSHPAGRSFLCLCCGKSFGRSSILKLHMRTHTDERPHACHLCGHRFRQSSHLSKHLLTHSSEPAFLCAECGRGFQRRASLVQHLLAHAQDQKPPCAPESKAEAPPLTDVLCSHCGQSFQRRSSLKRHLRIHARDKDRRSSEGSGSRRRDSDRRPFVCSDCGKAFRRSEHLVAHRRVHTGERPFSCQACGRSFTQSSQLVSHQRVHTGEKPYACPQCGKRFVRRASLARHLLTHGGPRPHHCTQCGKSFGQTQDLARHQRSHTGEKPCRCSECGEGFSQSAHLARHQRIHTGEKPHACDTCGHRFRNSSNLARHRRSHTGERPYSCQTCGRSFRRNAHLRRHLATHAEPGQEQAEPPQECVECGKSFSRSCNLLRHLLVHTGARPYSCTQCGRSFSRNSHLLRHLRTHARETLY.

The segment at methionine 1–leucine 38 is disordered. Positions glutamate 29–leucine 38 are enriched in basic and acidic residues. An SCAN box domain is found at methionine 56–proline 126. 2 disordered regions span residues glycine 153–glutamine 237 and lysine 255–leucine 324. Residues serine 162 and serine 208 each carry the phosphoserine modification. Residues serine 202–glutamine 224 are compositionally biased toward polar residues. Threonine 268 bears the Phosphothreonine mark. Residues threonine 268–lysine 280 show a composition bias toward basic and acidic residues. 14 C2H2-type zinc fingers span residues phenylalanine 347–histidine 370, phenylalanine 376–histidine 398, histidine 404–histidine 426, phenylalanine 432–histidine 454, valine 476–histidine 498, phenylalanine 522–histidine 544, phenylalanine 550–histidine 572, tyrosine 578–histidine 600, histidine 606–histidine 628, cysteine 634–histidine 656, histidine 662–histidine 684, tyrosine 690–histidine 712, glutamine 724–histidine 746, and tyrosine 752–histidine 774. Glutamine 483 is modified (N5-methylglutamine). The disordered stretch occupies residues lysine 492–arginine 520. Over residues histidine 498–arginine 520 the composition is skewed to basic and acidic residues.

Interacts with POU5F1/OCT4 and SOX2. Methylated at Gln-483 by N6AMT1.

The protein resides in the nucleus. In terms of biological role, embryonic stem (ES) cell-specific transcription factor required to maintain ES cell pluripotency. Can both activate and /or repress expression of target genes, depending on the context. Specifically binds the 5'-[GA]CGCNNGCG[CT]-3' DNA consensus sequence. Regulates expression of POU5F1/OCT4, ZSCAN4 and ALYREF/THOC4. This is Zinc finger and SCAN domain-containing protein 10 (ZSCAN10) from Homo sapiens (Human).